The chain runs to 654 residues: Fructose-1,6-bisphosphatase class 3 (654 aa).

Residues 288–307 (NPAFKPKKRPDKHERLTQRE) are disordered. Residues 298–307 (DKHERLTQRE) are compositionally biased toward basic and acidic residues.

This sequence belongs to the FBPase class 3 family. Mn(2+) is required as a cofactor.

The enzyme catalyses beta-D-fructose 1,6-bisphosphate + H2O = beta-D-fructose 6-phosphate + phosphate. It functions in the pathway carbohydrate biosynthesis; gluconeogenesis. This is Fructose-1,6-bisphosphatase class 3 from Staphylococcus aureus (strain bovine RF122 / ET3-1).